The following is a 371-amino-acid chain: 4-hydroxy-3-methylbut-2-en-1-yl diphosphate synthase (flavodoxin) (371 aa).

[4Fe-4S] cluster contacts are provided by C270, C273, C305, and E312.

Belongs to the IspG family. [4Fe-4S] cluster serves as cofactor.

The enzyme catalyses (2E)-4-hydroxy-3-methylbut-2-enyl diphosphate + oxidized [flavodoxin] + H2O + 2 H(+) = 2-C-methyl-D-erythritol 2,4-cyclic diphosphate + reduced [flavodoxin]. It participates in isoprenoid biosynthesis; isopentenyl diphosphate biosynthesis via DXP pathway; isopentenyl diphosphate from 1-deoxy-D-xylulose 5-phosphate: step 5/6. Its function is as follows. Converts 2C-methyl-D-erythritol 2,4-cyclodiphosphate (ME-2,4cPP) into 1-hydroxy-2-methyl-2-(E)-butenyl 4-diphosphate. The protein is 4-hydroxy-3-methylbut-2-en-1-yl diphosphate synthase (flavodoxin) of Shewanella sp. (strain ANA-3).